The sequence spans 544 residues: CTP synthase (544 aa).

Residues 1 to 266 (MKKRFIFITG…DQIICHHFKL (266 aa)) form an amidoligase domain region. Position 14 (serine 14) interacts with CTP. Serine 14 serves as a coordination point for UTP. Residues 15-20 (SLGKGI) and aspartate 72 contribute to the ATP site. Residues aspartate 72 and glutamate 140 each coordinate Mg(2+). CTP contacts are provided by residues 147–149 (DIE), 187–192 (KTKPTQ), and lysine 223. UTP is bound by residues 187-192 (KTKPTQ) and lysine 223. Positions 291-541 (TIGIIGKYIK…IKAAIQYKKI (251 aa)) constitute a Glutamine amidotransferase type-1 domain. Glycine 352 serves as a coordination point for L-glutamine. The active-site Nucleophile; for glutamine hydrolysis is cysteine 379. L-glutamine contacts are provided by residues 380–383 (LGMQ), glutamate 403, and arginine 469. Active-site residues include histidine 514 and glutamate 516.

It belongs to the CTP synthase family. Homotetramer.

The catalysed reaction is UTP + L-glutamine + ATP + H2O = CTP + L-glutamate + ADP + phosphate + 2 H(+). The enzyme catalyses L-glutamine + H2O = L-glutamate + NH4(+). It catalyses the reaction UTP + NH4(+) + ATP = CTP + ADP + phosphate + 2 H(+). The protein operates within pyrimidine metabolism; CTP biosynthesis via de novo pathway; CTP from UDP: step 2/2. Allosterically activated by GTP, when glutamine is the substrate; GTP has no effect on the reaction when ammonia is the substrate. The allosteric effector GTP functions by stabilizing the protein conformation that binds the tetrahedral intermediate(s) formed during glutamine hydrolysis. Inhibited by the product CTP, via allosteric rather than competitive inhibition. Catalyzes the ATP-dependent amination of UTP to CTP with either L-glutamine or ammonia as the source of nitrogen. Regulates intracellular CTP levels through interactions with the four ribonucleotide triphosphates. The protein is CTP synthase of Buchnera aphidicola subsp. Baizongia pistaciae (strain Bp).